We begin with the raw amino-acid sequence, 188 residues long: dCTP deaminase (188 aa).

Residues 111–116 (KSTYAR), 135–137 (TLE), Gln156, Tyr170, and Gln180 each bind dCTP. Catalysis depends on Glu137, which acts as the Proton donor/acceptor.

The protein belongs to the dCTP deaminase family. Homotrimer.

The enzyme catalyses dCTP + H2O + H(+) = dUTP + NH4(+). Its pathway is pyrimidine metabolism; dUMP biosynthesis; dUMP from dCTP (dUTP route): step 1/2. Catalyzes the deamination of dCTP to dUTP. This is dCTP deaminase from Francisella philomiragia subsp. philomiragia (strain ATCC 25017 / CCUG 19701 / FSC 153 / O#319-036).